The chain runs to 194 residues: CASP-like protein 1D1 (194 aa).

Over residues 1–16 (MGSDETKSTLDTERST) the composition is skewed to basic and acidic residues. The disordered stretch occupies residues 1–23 (MGSDETKSTLDTERSTVPRTGTT). Residues 1–31 (MGSDETKSTLDTERSTVPRTGTTTKSCSITQ) lie on the Cytoplasmic side of the membrane. Residues 32–52 (VVLRFVLFAATLTSIVVMVTS) form a helical membrane-spanning segment. Topologically, residues 53–77 (KQTKNIFIPGTPIRIPAAKFTNSPA) are extracellular. Residues 78–98 (LIYFVVALSVACFYSIVSTFV) traverse the membrane as a helical segment. Over 99 to 109 (TVSAFKKHSCS) the chain is Cytoplasmic. The chain crosses the membrane as a helical span at residues 110–130 (AILLLNLAIMDAVMVGIVASA). Residues 131-163 (TGAGGGVAYLGLKGNKEVRWGKICNIYDKFCRH) lie on the Extracellular side of the membrane. A helical transmembrane segment spans residues 164 to 184 (VGGAIAVSLFASVILLLLSII). At 185–194 (SVLSLYKKIR) the chain is on the cytoplasmic side.

The protein belongs to the Casparian strip membrane proteins (CASP) family. Homodimer and heterodimers.

The protein resides in the cell membrane. This is CASP-like protein 1D1 from Arabidopsis lyrata subsp. lyrata (Lyre-leaved rock-cress).